Consider the following 680-residue polypeptide: DNA-directed RNA polymerase subunit beta' (680 aa).

Residues cysteine 69, cysteine 71, cysteine 87, and cysteine 90 each contribute to the Zn(2+) site. Residues aspartate 489, aspartate 491, and aspartate 493 each contribute to the Mg(2+) site.

Belongs to the RNA polymerase beta' chain family. RpoC1 subfamily. As to quaternary structure, in plastids the minimal PEP RNA polymerase catalytic core is composed of four subunits: alpha, beta, beta', and beta''. When a (nuclear-encoded) sigma factor is associated with the core the holoenzyme is formed, which can initiate transcription. Requires Mg(2+) as cofactor. Zn(2+) serves as cofactor.

The protein resides in the plastid. It is found in the chloroplast. It carries out the reaction RNA(n) + a ribonucleoside 5'-triphosphate = RNA(n+1) + diphosphate. Its function is as follows. DNA-dependent RNA polymerase catalyzes the transcription of DNA into RNA using the four ribonucleoside triphosphates as substrates. The polypeptide is DNA-directed RNA polymerase subunit beta' (Aethionema grandiflorum (Persian stone-cress)).